Consider the following 652-residue polypeptide: DNA ligase (652 aa).

Residues 29-33, 78-79, and Glu-107 each bind NAD(+); these read DSEYD and SL. Lys-109 acts as the N6-AMP-lysine intermediate in catalysis. The NAD(+) site is built by Arg-130, Glu-164, Lys-278, and Lys-302. 4 residues coordinate Zn(2+): Cys-395, Cys-398, Cys-413, and Cys-418. One can recognise a BRCT domain in the interval 577-652; sequence VADAALSGLT…VRDEAWLESL (76 aa).

This sequence belongs to the NAD-dependent DNA ligase family. LigA subfamily. The cofactor is Mg(2+). Mn(2+) serves as cofactor.

The enzyme catalyses NAD(+) + (deoxyribonucleotide)n-3'-hydroxyl + 5'-phospho-(deoxyribonucleotide)m = (deoxyribonucleotide)n+m + AMP + beta-nicotinamide D-nucleotide.. Its function is as follows. DNA ligase that catalyzes the formation of phosphodiester linkages between 5'-phosphoryl and 3'-hydroxyl groups in double-stranded DNA using NAD as a coenzyme and as the energy source for the reaction. It is essential for DNA replication and repair of damaged DNA. The polypeptide is DNA ligase (Streptococcus pneumoniae (strain Hungary19A-6)).